Consider the following 376-residue polypeptide: UDP-N-acetylglucosamine 2-epimerase (376 aa).

Substrate contacts are provided by residues Arg10, Lys15, Asp95, Glu117, His213, Gln271, Phe276, 290-292 (SGG), Glu296, and Arg313.

It belongs to the UDP-N-acetylglucosamine 2-epimerase family. In terms of assembly, homodimer.

The protein localises to the cytoplasm. It carries out the reaction UDP-N-acetyl-alpha-D-glucosamine = UDP-N-acetyl-alpha-D-mannosamine. It functions in the pathway bacterial outer membrane biogenesis; enterobacterial common antigen biosynthesis. Catalyzes the reversible epimerization at C-2 of UDP-N-acetylglucosamine (UDP-GlcNAc) and thereby provides bacteria with UDP-N-acetylmannosamine (UDP-ManNAc), the activated donor of ManNAc residues. The protein is UDP-N-acetylglucosamine 2-epimerase of Yersinia pestis.